A 1325-amino-acid polypeptide reads, in one-letter code: uncharacterized protein (1325 aa).

Positions 1 to 18 (MNRIYRVIWNCTLQVFQA) are cleaved as a signal peptide. A lipid anchor (N-palmitoyl cysteine) is attached at C19. A lipid anchor (S-diacylglycerol cysteine) is attached at C19.

To E.coli YfaL.

Its subcellular location is the cell membrane. This is an uncharacterized protein from Escherichia coli (strain K12).